We begin with the raw amino-acid sequence, 1359 residues long: Probable protein NAP1 (1359 aa).

Positions 1267–1359 are disordered; it reads PSMKQNRADT…VSRSGPLSYK (93 aa). Composition is skewed to basic and acidic residues over residues 1272-1282 and 1300-1310; these read NRADTTPRSHT and EGDRRTGERQL.

This sequence belongs to the HEM-1/HEM-2 family. Binds PIR.

Its function is as follows. Involved in regulation of actin and microtubule organization. Part of a WAVE complex that activates the Arp2/3 complex. This is Probable protein NAP1 (NAP1) from Oryza sativa subsp. japonica (Rice).